The sequence spans 322 residues: NADH-quinone oxidoreductase subunit H (322 aa).

Helical transmembrane passes span 12 to 32 (VGKALIVLVGIVGAGAFMSFI), 79 to 99 (IFILAPIIAFTAFILAFAVVP), 111 to 131 (VGLLYILAIAGLAVYAVLFAG), 151 to 171 (LSYEVFLGLSLMGIVIQTGSF), 183 to 203 (LWNVVPQILGFITFLFAGVAV), 234 to 254 (FFVGEYIGIVLISSLIVTLFF), 262 to 282 (LPPFIWFALKTACFMVFFILL), and 301 to 321 (VCLPLTLVNMLITGAVVLINV).

It belongs to the complex I subunit 1 family. In terms of assembly, NDH-1 is composed of 14 different subunits. Subunits NuoA, H, J, K, L, M, N constitute the membrane sector of the complex.

Its subcellular location is the cell inner membrane. It catalyses the reaction a quinone + NADH + 5 H(+)(in) = a quinol + NAD(+) + 4 H(+)(out). Its function is as follows. NDH-1 shuttles electrons from NADH, via FMN and iron-sulfur (Fe-S) centers, to quinones in the respiratory chain. The immediate electron acceptor for the enzyme in this species is believed to be ubiquinone. Couples the redox reaction to proton translocation (for every two electrons transferred, four hydrogen ions are translocated across the cytoplasmic membrane), and thus conserves the redox energy in a proton gradient. This subunit may bind ubiquinone. The chain is NADH-quinone oxidoreductase subunit H from Aeromonas salmonicida (strain A449).